We begin with the raw amino-acid sequence, 195 residues long: tRNA (pseudouridine(54)-N(1))-methyltransferase (195 aa).

S-adenosyl-L-methionine is bound at residue L129.

Belongs to the methyltransferase superfamily. TrmY family. As to quaternary structure, homodimer.

The protein resides in the cytoplasm. It carries out the reaction pseudouridine(54) in tRNA + S-adenosyl-L-methionine = N(1)-methylpseudouridine(54) in tRNA + S-adenosyl-L-homocysteine + H(+). In terms of biological role, specifically catalyzes the N1-methylation of pseudouridine at position 54 (Psi54) in tRNAs. This is tRNA (pseudouridine(54)-N(1))-methyltransferase from Methanocorpusculum labreanum (strain ATCC 43576 / DSM 4855 / Z).